The chain runs to 211 residues: Ribonuclease HII (211 aa).

The RNase H type-2 domain occupies 17–211; the sequence is FLSAGVDEVG…CQPSLFEVRS (195 aa). A divalent metal cation-binding residues include D23, E24, and D119.

This sequence belongs to the RNase HII family. The cofactor is Mn(2+). Requires Mg(2+) as cofactor.

It is found in the cytoplasm. It catalyses the reaction Endonucleolytic cleavage to 5'-phosphomonoester.. In terms of biological role, endonuclease that specifically degrades the RNA of RNA-DNA hybrids. The protein is Ribonuclease HII of Trichodesmium erythraeum (strain IMS101).